A 347-amino-acid polypeptide reads, in one-letter code: NADH-quinone oxidoreductase subunit H (347 aa).

The next 8 helical transmembrane spans lie at 21–41 (IAGILLIALPLMLGVAMIIYA), 87–107 (GLFLIAPIITFTVALMAWAVI), 120–140 (VGLLYVLAISSLGVYGVVIAG), 160–180 (ISYEVSIGFILICVVLWAGTF), 194–214 (WIINGFVANPLLFPMWVMFLI), 259–279 (LLMCALNAVLFWGGYLPPLDI), 282–302 (LYLVPGFVWLLLKILFFFFIF), and 324–344 (VFLPVSLLFVFLVSGYLMATG).

This sequence belongs to the complex I subunit 1 family. As to quaternary structure, NDH-1 is composed of 14 different subunits. Subunits NuoA, H, J, K, L, M, N constitute the membrane sector of the complex.

The protein resides in the cell inner membrane. It carries out the reaction a quinone + NADH + 5 H(+)(in) = a quinol + NAD(+) + 4 H(+)(out). In terms of biological role, NDH-1 shuttles electrons from NADH, via FMN and iron-sulfur (Fe-S) centers, to quinones in the respiratory chain. The immediate electron acceptor for the enzyme in this species is believed to be ubiquinone. Couples the redox reaction to proton translocation (for every two electrons transferred, four hydrogen ions are translocated across the cytoplasmic membrane), and thus conserves the redox energy in a proton gradient. This subunit may bind ubiquinone. This chain is NADH-quinone oxidoreductase subunit H, found in Novosphingobium aromaticivorans (strain ATCC 700278 / DSM 12444 / CCUG 56034 / CIP 105152 / NBRC 16084 / F199).